The following is a 67-amino-acid chain: Large ribosomal subunit protein uL29 (67 aa).

The protein belongs to the universal ribosomal protein uL29 family.

The polypeptide is Large ribosomal subunit protein uL29 (Methanosarcina barkeri (strain Fusaro / DSM 804)).